A 214-amino-acid polypeptide reads, in one-letter code: tRNA (guanine-N(7)-)-methyltransferase (214 aa).

Residues Glu-44, Glu-69, Asp-96, and Asp-118 each contribute to the S-adenosyl-L-methionine site. Asp-118 is an active-site residue. Lys-122 provides a ligand contact to substrate. The interval 124–129 (RHEKRR) is interaction with RNA. Substrate is bound by residues Asp-154 and 192-195 (TEYE).

Belongs to the class I-like SAM-binding methyltransferase superfamily. TrmB family.

The enzyme catalyses guanosine(46) in tRNA + S-adenosyl-L-methionine = N(7)-methylguanosine(46) in tRNA + S-adenosyl-L-homocysteine. Its pathway is tRNA modification; N(7)-methylguanine-tRNA biosynthesis. In terms of biological role, catalyzes the formation of N(7)-methylguanine at position 46 (m7G46) in tRNA. This chain is tRNA (guanine-N(7)-)-methyltransferase, found in Lactiplantibacillus plantarum (strain ATCC BAA-793 / NCIMB 8826 / WCFS1) (Lactobacillus plantarum).